We begin with the raw amino-acid sequence, 266 residues long: L-aspartate dehydrogenase (266 aa).

2 residues coordinate NAD(+): Ala-123 and Asn-189. His-219 is a catalytic residue.

This sequence belongs to the L-aspartate dehydrogenase family.

It carries out the reaction L-aspartate + NADP(+) + H2O = oxaloacetate + NH4(+) + NADPH + H(+). The enzyme catalyses L-aspartate + NAD(+) + H2O = oxaloacetate + NH4(+) + NADH + H(+). The protein operates within cofactor biosynthesis; NAD(+) biosynthesis; iminoaspartate from L-aspartate (dehydrogenase route): step 1/1. In terms of biological role, specifically catalyzes the NAD or NADP-dependent dehydrogenation of L-aspartate to iminoaspartate. The sequence is that of L-aspartate dehydrogenase from Cupriavidus necator (strain ATCC 17699 / DSM 428 / KCTC 22496 / NCIMB 10442 / H16 / Stanier 337) (Ralstonia eutropha).